The chain runs to 277 residues: Thymidylate synthase (277 aa).

Residue R27 coordinates dUMP. H57 provides a ligand contact to (6R)-5,10-methylene-5,6,7,8-tetrahydrofolate. A dUMP-binding site is contributed by R132 to R133. The Nucleophile role is filled by C152. Residues R179 to D182, N190, and H220 to Y222 contribute to the dUMP site. Residue D182 participates in (6R)-5,10-methylene-5,6,7,8-tetrahydrofolate binding. (6R)-5,10-methylene-5,6,7,8-tetrahydrofolate is bound at residue A276.

It belongs to the thymidylate synthase family. Bacterial-type ThyA subfamily. As to quaternary structure, homodimer.

The protein localises to the cytoplasm. It catalyses the reaction dUMP + (6R)-5,10-methylene-5,6,7,8-tetrahydrofolate = 7,8-dihydrofolate + dTMP. It participates in pyrimidine metabolism; dTTP biosynthesis. Functionally, catalyzes the reductive methylation of 2'-deoxyuridine-5'-monophosphate (dUMP) to 2'-deoxythymidine-5'-monophosphate (dTMP) while utilizing 5,10-methylenetetrahydrofolate (mTHF) as the methyl donor and reductant in the reaction, yielding dihydrofolate (DHF) as a by-product. This enzymatic reaction provides an intracellular de novo source of dTMP, an essential precursor for DNA biosynthesis. The polypeptide is Thymidylate synthase (Acidovorax sp. (strain JS42)).